Reading from the N-terminus, the 272-residue chain is Sordarin/hypoxysordarin biosynthesis cluster protein P (272 aa).

Residues Asn6 and Asn23 are each glycosylated (N-linked (GlcNAc...) asparagine). 2 consecutive transmembrane segments (helical) span residues Phe31–Leu51 and Ala67–Ala87. Asn208 carries an N-linked (GlcNAc...) asparagine glycan.

The protein localises to the membrane. It functions in the pathway antibiotic biosynthesis. Functionally, part of the gene cluster that mediates the biosynthesis of sordarin and hypoxysordarin, glycoside antibiotics with a unique tetracyclic diterpene aglycone structure. First, the geranylgeranyl diphosphate synthase sdnC constructs GGDP from farnesyl diphosphate and isopentenyl diphosphate. The diterpene cyclase sdnA then catalyzes the cyclization of GGDP to afford cycloaraneosene. Cycloaraneosene is then hydroxylated four times by the putative cytochrome P450 monooxygenases sdnB, sdnE, sdnF and sdnH to give a hydroxylated cycloaraneosene derivative such as cycloaraneosene-8,9,13,19-tetraol. Although the order of the hydroxylations is unclear, at least C8, C9 and C13 of the cycloaraneosene skeleton are hydroxylated before the sordaricin formation. Dehydration of the 13-hydroxy group of the hydroxylated cycloaraneosene derivative might be catalyzed by an unassigned hypothetical protein such as sdnG and sdnP to construct the cyclopentadiene moiety. The FAD-dependent oxidoreductase sdnN is proposed to catalyze the oxidation at C9 of the hydroxylated cycloaraneosene derivative and also catalyze the Baeyer-Villiger oxidation to give the lactone intermediate. The presumed lactone intermediate would be hydrolyzed to give an acrolein moiety and a carboxylate moiety. Then, [4+2]cycloaddition would occur between the acrolein moiety and the cyclopentadiene moiety to give sordaricin. SdnN might also be involved in the [4+2]cycloaddition after the hypothesized oxidation to accommodate the oxidized product and prompt the [4+2]cycloaddition. GDP-6-deoxy-D-altrose may be biosynthesized from GDP-D-mannose by the putative GDP-mannose-4,6-dehydratase sdnI and the short-chain dehydrogenase sdnK. The glycosyltransferase sdnJ catalyzes the attachment of 6-deoxy-D-altrose onto the 19-hydroxy group of sordaricin to give 4'-O-demethylsordarin. The methyltransferase sdnD would complete the biosynthesis of sordarin. Sordarin can be further modified into hypoxysordarin. The unique acyl chain at the 3'-hydroxy group of hypoxysordarin would be constructed by an iterative type I PKS sdnO and the trans-acting polyketide methyltransferase sdnL. SdnL would be responsible for the introduction of an alpha-methyl group of the polyketide chain. Alternatively, the beta-lactamase-like protein sdnR might be responsible for the cleavage and transfer of the polyketide chain from the PKS sdnO to sordarin. Two putative cytochrome P450 monooxygenases, sdnQ and sdnT, might catalyze the epoxidations of the polyketide chain to complete the biosynthesis of hypoxysordarin. Transcriptional regulators sdnM and sdnS are presumably encoded for the transcriptional regulation of the expression of the sdn gene cluster. This Sordaria araneosa (Pleurage araneosa) protein is Sordarin/hypoxysordarin biosynthesis cluster protein P.